We begin with the raw amino-acid sequence, 512 residues long: Probable ubiquitin carboxyl-terminal hydrolase 3 (512 aa).

Residues 64 to 109 (TSKTKESEKSPKSWSAIAKKHVQGDSPVKKSHSVPVPSDRSEKKSF) form a disordered region. The USP domain maps to 133 to 511 (RGFINTGNIC…VAYLLFYTRR (379 aa)). The active-site Nucleophile is the Cys-142. His-453 acts as the Proton acceptor in catalysis.

It belongs to the peptidase C19 family.

It catalyses the reaction Thiol-dependent hydrolysis of ester, thioester, amide, peptide and isopeptide bonds formed by the C-terminal Gly of ubiquitin (a 76-residue protein attached to proteins as an intracellular targeting signal).. The chain is Probable ubiquitin carboxyl-terminal hydrolase 3 (ubp3) from Schizosaccharomyces pombe (strain 972 / ATCC 24843) (Fission yeast).